The chain runs to 1486 residues: Homeobox protein cut-like 2 (1486 aa).

The interval 114–167 (DRLQPPSFDPSGQPRRDLHTSWKRNPELLSPKEQREGTSPAGPTLTEGSRLPGI) is disordered. The segment covering 127 to 149 (PRRDLHTSWKRNPELLSPKEQRE) has biased composition (basic and acidic residues). Serine 143 is modified (phosphoserine). Residues 195-374 (TLAARLGEAE…IKTELSILKA (180 aa)) are a coiled coil. Disordered stretches follow at residues 415–481 (LLAS…LSPF), 517–549 (PTAP…PGAE), 661–690 (EIES…STSE), 716–758 (VAPR…AQAP), 800–858 (YASV…EGAT), and 964–1032 (GQAV…SGSQ). The span at 419 to 428 (PEEDPSEDDS) shows a compositional bias: acidic residues. Residues 443 to 460 (QQLPPPPGPEDPLSPSPG) show a composition bias toward pro residues. Residues 461–470 (QPLLGPSLGP) are compositionally biased toward low complexity. The span at 517–532 (PTAPATPAPGPEPLGG) shows a compositional bias: pro residues. A DNA-binding region (CUT 1) is located at residues 544–631 (AGPGAEEEQL…VLALRTIQVR (88 aa)). Positions 680-690 (ANGTTPASTSE) are enriched in polar residues. The stretch at 690–717 (EDAIKSILEQARREMQAQQQALLEMEVA) forms a coiled coil. Low complexity predominate over residues 802–816 (SVSPSLSSSSSSGYS). The span at 834–844 (PEDEAAAGAED) shows a compositional bias: acidic residues. A compositionally biased stretch (basic and acidic residues) spans 845 to 854 (EPPRTGELKA). Residues 887–974 (QYELYMYREV…QAVGQQPGAS (88 aa)) constitute a DNA-binding region (CUT 2). Residues 967 to 976 (VGQQPGASQA) are compositionally biased toward polar residues. Positions 1017 to 1031 (GRSSSSLSGKMYSGS) are enriched in low complexity. The CUT 3 DNA-binding region spans 1038–1125 (QEIVAMSPEL…VEKLRDMKKL (88 aa)). Positions 1168–1227 (IKKPRVVLAPEEKEALRKAYQLEPYPSQQTIELLSFQLNLKTNTVINWFHNYRSRMRREM) form a DNA-binding region, homeobox. A disordered region spans residues 1231-1453 (GTQDEPDLDP…ALHPSAKVNP (223 aa)). Positions 1266 to 1276 (EDQKPTVKELE) are enriched in basic and acidic residues. The segment covering 1283-1293 (ENSTPLTTQDK) has biased composition (polar residues). Basic and acidic residues predominate over residues 1320 to 1334 (ELDKGQGPPKEEHPD). Residues 1381–1401 (KSASESSRCSLEVSLNSPSAA) show a composition bias toward polar residues. Low complexity predominate over residues 1402–1420 (SSPGLMMSVSPVPSSSAPI). Over residues 1421-1431 (SPSPPGAPPAK) the composition is skewed to pro residues.

It belongs to the CUT homeobox family.

It localises to the nucleus. Functionally, transcription factor involved in the control of neuronal proliferation and differentiation in the brain. Regulates dendrite development and branching, dendritic spine formation, and synaptogenesis in cortical layers II-III. Binds to DNA in a sequence-specific manner. In Homo sapiens (Human), this protein is Homeobox protein cut-like 2 (CUX2).